A 407-amino-acid chain; its full sequence is 1-deoxy-D-xylulose 5-phosphate reductoisomerase (407 aa).

NADPH contacts are provided by threonine 25, glycine 26, serine 27, isoleucine 28, asparagine 53, and asparagine 136. 1-deoxy-D-xylulose 5-phosphate is bound at residue lysine 137. Residue glutamate 138 coordinates NADPH. A Mn(2+)-binding site is contributed by aspartate 162. Positions 163, 164, 188, and 211 each coordinate 1-deoxy-D-xylulose 5-phosphate. Glutamate 164 is a Mn(2+) binding site. An NADPH-binding site is contributed by glycine 217. The 1-deoxy-D-xylulose 5-phosphate site is built by serine 224, asparagine 229, lysine 230, and glutamate 233. Glutamate 233 lines the Mn(2+) pocket.

This sequence belongs to the DXR family. Mg(2+) serves as cofactor. Mn(2+) is required as a cofactor.

It catalyses the reaction 2-C-methyl-D-erythritol 4-phosphate + NADP(+) = 1-deoxy-D-xylulose 5-phosphate + NADPH + H(+). It participates in isoprenoid biosynthesis; isopentenyl diphosphate biosynthesis via DXP pathway; isopentenyl diphosphate from 1-deoxy-D-xylulose 5-phosphate: step 1/6. In terms of biological role, catalyzes the NADPH-dependent rearrangement and reduction of 1-deoxy-D-xylulose-5-phosphate (DXP) to 2-C-methyl-D-erythritol 4-phosphate (MEP). The protein is 1-deoxy-D-xylulose 5-phosphate reductoisomerase of Nitrobacter hamburgensis (strain DSM 10229 / NCIMB 13809 / X14).